The sequence spans 191 residues: dTTP/UTP pyrophosphatase (191 aa).

Residue D70 is the Proton acceptor of the active site.

Belongs to the Maf family. YhdE subfamily. A divalent metal cation is required as a cofactor.

The protein resides in the cytoplasm. It carries out the reaction dTTP + H2O = dTMP + diphosphate + H(+). The catalysed reaction is UTP + H2O = UMP + diphosphate + H(+). In terms of biological role, nucleoside triphosphate pyrophosphatase that hydrolyzes dTTP and UTP. May have a dual role in cell division arrest and in preventing the incorporation of modified nucleotides into cellular nucleic acids. The protein is dTTP/UTP pyrophosphatase of Clostridium novyi (strain NT).